We begin with the raw amino-acid sequence, 866 residues long: Scm-like with four MBT domains protein 1 (866 aa).

4 MBT repeats span residues 20–120 (LSWE…LEAP), 128–232 (SDWD…LQPP), 242–348 (AEWQ…ISPP), and 356–453 (FDWA…LSTP). The antigenic epitope stretch occupies residues 34–42 (VPYGSFKHV). The disordered stretch occupies residues 641–777 (KKKNKRIGRP…DDENKPPSPK (137 aa)). The segment covering 663 to 682 (KASKRRKRRKNVFVHKKKRS) has biased composition (basic residues). Residues 683-694 (SASVDNTPAGSP) show a composition bias toward polar residues. Composition is skewed to acidic residues over residues 699–713 (GEDE…DDSL) and 721–730 (QQDELQEESE). Low complexity predominate over residues 737–749 (CSSSPTQSEISTS). 2 positions are modified to phosphoserine: S767 and S775. Positions 796–864 (WSVADVVRFI…RIKFAFYEQF (69 aa)) constitute an SAM domain.

As to quaternary structure, interacts with MYOD1. Component of the SLC (SFMBT1-LSD1-CoREST) corepressor complex, which also contains KDM1A/LSD1 and RCOR1/CoREST. Interacts with KDM1A/LSD1 and RCOR1/CoREST. Interacts with L3MBTL3. Expressed in all cell lines and normal tissues tested, including the thymus.

Its subcellular location is the nucleus. In terms of biological role, histone-binding protein, which is part of various corepressor complexes. Mediates the recruitment of corepressor complexes to target genes, followed by chromatin compaction and repression of transcription. Plays a role during myogenesis: required for the maintenance of undifferentiated states of myogenic progenitor cells via interaction with MYOD1. Interaction with MYOD1 leads to the recruitment of associated corepressors and silencing of MYOD1 target genes. Part of the SLC complex in germ cells, where it may play a role during spermatogenesis. The chain is Scm-like with four MBT domains protein 1 (SFMBT1) from Homo sapiens (Human).